The following is a 264-amino-acid chain: Thymidylate synthase (264 aa).

Arg21 is a binding site for dUMP. His51 lines the (6R)-5,10-methylene-5,6,7,8-tetrahydrofolate pocket. 126–127 contributes to the dUMP binding site; that stretch reads RR. Cys146 functions as the Nucleophile in the catalytic mechanism. Residues 166–169, Asn177, and 207–209 each bind dUMP; these read RSCD and HLY. Asp169 serves as a coordination point for (6R)-5,10-methylene-5,6,7,8-tetrahydrofolate. A (6R)-5,10-methylene-5,6,7,8-tetrahydrofolate-binding site is contributed by Ala263.

The protein belongs to the thymidylate synthase family. Bacterial-type ThyA subfamily. In terms of assembly, homodimer.

It localises to the cytoplasm. The enzyme catalyses dUMP + (6R)-5,10-methylene-5,6,7,8-tetrahydrofolate = 7,8-dihydrofolate + dTMP. Its pathway is pyrimidine metabolism; dTTP biosynthesis. Catalyzes the reductive methylation of 2'-deoxyuridine-5'-monophosphate (dUMP) to 2'-deoxythymidine-5'-monophosphate (dTMP) while utilizing 5,10-methylenetetrahydrofolate (mTHF) as the methyl donor and reductant in the reaction, yielding dihydrofolate (DHF) as a by-product. This enzymatic reaction provides an intracellular de novo source of dTMP, an essential precursor for DNA biosynthesis. In Shigella boydii serotype 4 (strain Sb227), this protein is Thymidylate synthase.